The sequence spans 430 residues: UDP-N-acetylmuramoylalanine--D-glutamate ligase (430 aa).

105–111 lines the ATP pocket; sequence GSNGKTT.

It belongs to the MurCDEF family.

Its subcellular location is the cytoplasm. The enzyme catalyses UDP-N-acetyl-alpha-D-muramoyl-L-alanine + D-glutamate + ATP = UDP-N-acetyl-alpha-D-muramoyl-L-alanyl-D-glutamate + ADP + phosphate + H(+). The protein operates within cell wall biogenesis; peptidoglycan biosynthesis. Functionally, cell wall formation. Catalyzes the addition of glutamate to the nucleotide precursor UDP-N-acetylmuramoyl-L-alanine (UMA). The protein is UDP-N-acetylmuramoylalanine--D-glutamate ligase of Pseudothermotoga lettingae (strain ATCC BAA-301 / DSM 14385 / NBRC 107922 / TMO) (Thermotoga lettingae).